The following is a 245-amino-acid chain: MIIPAIDLIDGQVVRLFQGDYAKKTEFSLDPKNQLLSYQQDGAALLHLVDLTGAKDPDKRQTKLIEEIAASLSTPLQVGGGIRSAADVDALLNAGVARVVIGSLAVKSPEVVLRLFDKYGGDAICLALDVNIDADGNKMVAVHGWQQGGGKSLESLVDTFMPAGLKHALVTDISRDGTMTGANTALYCELAERFNEVQWQASGGVATLDDVKAVKTSGASGIIIGKALLTGVFSAKEAIACWPNV.

The Proton acceptor role is filled by D7. The Proton donor role is filled by D129.

The protein belongs to the HisA/HisF family.

Its subcellular location is the cytoplasm. It catalyses the reaction 1-(5-phospho-beta-D-ribosyl)-5-[(5-phospho-beta-D-ribosylamino)methylideneamino]imidazole-4-carboxamide = 5-[(5-phospho-1-deoxy-D-ribulos-1-ylimino)methylamino]-1-(5-phospho-beta-D-ribosyl)imidazole-4-carboxamide. Its pathway is amino-acid biosynthesis; L-histidine biosynthesis; L-histidine from 5-phospho-alpha-D-ribose 1-diphosphate: step 4/9. This is 1-(5-phosphoribosyl)-5-[(5-phosphoribosylamino)methylideneamino] imidazole-4-carboxamide isomerase from Shewanella amazonensis (strain ATCC BAA-1098 / SB2B).